We begin with the raw amino-acid sequence, 247 residues long: 1-(5-phosphoribosyl)-5-[(5-phosphoribosylamino)methylideneamino] imidazole-4-carboxamide isomerase (247 aa).

The active-site Proton acceptor is the aspartate 8. The Proton donor role is filled by aspartate 131.

The protein belongs to the HisA/HisF family.

It is found in the cytoplasm. It carries out the reaction 1-(5-phospho-beta-D-ribosyl)-5-[(5-phospho-beta-D-ribosylamino)methylideneamino]imidazole-4-carboxamide = 5-[(5-phospho-1-deoxy-D-ribulos-1-ylimino)methylamino]-1-(5-phospho-beta-D-ribosyl)imidazole-4-carboxamide. Its pathway is amino-acid biosynthesis; L-histidine biosynthesis; L-histidine from 5-phospho-alpha-D-ribose 1-diphosphate: step 4/9. The protein is 1-(5-phosphoribosyl)-5-[(5-phosphoribosylamino)methylideneamino] imidazole-4-carboxamide isomerase of Cupriavidus metallidurans (strain ATCC 43123 / DSM 2839 / NBRC 102507 / CH34) (Ralstonia metallidurans).